The chain runs to 1099 residues: Inverted formin-2 (1099 aa).

Residues 1-330 (MSLTEGAHTK…RAVLLADDCQ (330 aa)) enclose the GBD/FH3 domain. Basic and acidic residues-rich tracts occupy residues 348-359 (SSKEKRKTDKCT) and 367-385 (QTDK…KKDP). Disordered regions lie at residues 348–391 (SSKE…SGIP), 432–509 (PSPP…PTPP), and 1000–1019 (AEKR…KGEN). An FH1 domain is found at 426-569 (TCSSVLPSPP…GMLPPPPPLP (144 aa)). Residues 452 to 499 (PLPPPPPPLPGTELSPPPPGMVALSLPPPPPPLPGMGGMLPPPPPPLP) are compositionally biased toward pro residues. Residues 621–1009 (FLKVNKPTLK…AEKRKQQIAD (389 aa)) form the FH2 domain. Positions 907-1019 (LKKLRDLQNK…EETKRQKGEN (113 aa)) form a coiled coil. In terms of domain architecture, WH2 spans 1037–1052 (DDLLADIKKGFQLRKT). The segment at 1064–1085 (KTLSSETNRTDIQHVGKRPEVP) is disordered. Residues 1071–1083 (NRTDIQHVGKRPE) are compositionally biased toward basic and acidic residues.

It belongs to the formin homology family.

The sequence is that of Inverted formin-2 (inf2) from Xenopus laevis (African clawed frog).